The chain runs to 62 residues: Sec-independent protein translocase protein TatAc (62 aa).

Residues 8–28 traverse the membrane as a helical segment; the sequence is ILVILFVGFLVFGPDKLPALG.

It belongs to the TatA/E family. Forms a complex with TatC.

Its subcellular location is the cell membrane. Functionally, part of the twin-arginine translocation (Tat) system that transports large folded proteins containing a characteristic twin-arginine motif in their signal peptide across membranes. TatA could form the protein-conducting channel of the Tat system. This is Sec-independent protein translocase protein TatAc from Bacillus subtilis (strain 168).